The following is a 357-amino-acid chain: Malonyl CoA reductase (NADP) (357 aa).

13-16 (TGLV) provides a ligand contact to NADP(+). Cys150 serves as the catalytic Acyl-thioester intermediate. 180 to 181 (SG) is an NADP(+) binding site. The active-site Proton acceptor is His245. 332 to 333 (NT) lines the NADP(+) pocket.

This sequence belongs to the aspartate-semialdehyde dehydrogenase family. As to quaternary structure, homotetramer.

The enzyme catalyses 3-oxopropanoate + NADP(+) + CoA = malonyl-CoA + NADPH + H(+). Its function is as follows. Catalyzes the reduction of malonyl-CoA to malonate semialdehyde, a key step in the 3-hydroxypropanoate and the 3-hydroxypropanoate/4-hydroxybutyrate cycles. The sequence is that of Malonyl CoA reductase (NADP) from Metallosphaera sedula (strain ATCC 51363 / DSM 5348 / JCM 9185 / NBRC 15509 / TH2).